The primary structure comprises 225 residues: Cardiotrophin-like cytokine factor 1 (225 aa).

The signal sequence occupies residues 1 to 27 (MDLRAGDSWGMLACLCTVLWHLPAVPA). N-linked (GlcNAc...) asparagine glycosylation is present at N29.

The protein belongs to the IL-6 superfamily. As to quaternary structure, forms a heteromeric complex with cardiotrophin-like cytokine CRLF1/CLF-1; the CRLF1-CLCF1 complex is a ligand for the ciliary neurotrophic factor receptor/CNTFR. The CRLF1-CLCF1 heterodimer binds SORL1 (via N-terminal ectodomain); within this complex, the interaction is mediated predominantly by the CRLF1 moiety. The tripartite signaling complex formed by CRLF1, CLCF1 and CNTFR also binds SORL1. In terms of tissue distribution, expressed predominantly in lymph nodes, spleen, peripheral blood lymphocytes, bone marrow, and fetal liver.

It is found in the secreted. Functionally, in complex with CRLF1, forms a heterodimeric neurotropic cytokine that plays a crucial role during neuronal development. Also stimulates B-cells. Binds to and activates the ILST/gp130 receptor. This Homo sapiens (Human) protein is Cardiotrophin-like cytokine factor 1 (CLCF1).